Here is a 179-residue protein sequence, read N- to C-terminus: Interleukin-10 (179 aa).

A signal peptide spans 1–19; the sequence is MPSPALLCCCLVLLAGVGA. Disulfide bonds link cysteine 31-cysteine 127 and cysteine 81-cysteine 133. Asparagine 135 carries an N-linked (GlcNAc...) asparagine glycan.

The protein belongs to the IL-10 family. As to quaternary structure, homodimer. Interacts with IL10RA and IL10RB.

The protein resides in the secreted. Major immune regulatory cytokine that acts on many cells of the immune system where it has profound anti-inflammatory functions, limiting excessive tissue disruption caused by inflammation. Mechanistically, IL10 binds to its heterotetrameric receptor comprising IL10RA and IL10RB leading to JAK1 and STAT2-mediated phosphorylation of STAT3. In turn, STAT3 translocates to the nucleus where it drives expression of anti-inflammatory mediators. Targets antigen-presenting cells (APCs) such as macrophages and monocytes and inhibits their release of pro-inflammatory cytokines including granulocyte-macrophage colony-stimulating factor /GM-CSF, granulocyte colony-stimulating factor/G-CSF, IL-1 alpha, IL-1 beta, IL-6, IL-8 and TNF-alpha. Also interferes with antigen presentation by reducing the expression of MHC-class II and co-stimulatory molecules, thereby inhibiting their ability to induce T cell activation. In addition, controls the inflammatory response of macrophages by reprogramming essential metabolic pathways including mTOR signaling. The polypeptide is Interleukin-10 (IL10) (Vulpes vulpes (Red fox)).